The primary structure comprises 408 residues: UDP-N-acetylglucosamine--dolichyl-phosphate N-acetylglucosaminephosphotransferase (408 aa).

Residues M1–P10 are Lumenal-facing. Residues L11–A38 traverse the membrane as a helical segment. Residues A39–Q58 are Cytoplasmic-facing. UDP-N-acetyl-alpha-D-glucosamine is bound by residues Q44 to L46 and E56. Tunicamycin A1 is bound at residue L46. Residues G59–F78 form a helical membrane-spanning segment. Residues L79–P91 lie on the Lumenal side of the membrane. A helical membrane pass occupies residues H92 to L118. N119 provides a ligand contact to tunicamycin A1. Residues N119–R121 are Cytoplasmic-facing. A helical transmembrane segment spans residues W122–N143. K125 serves as a coordination point for dolichyl phosphate. Residues F144–G166 are Lumenal-facing. N-linked (GlcNAc...) asparagine glycosylation is present at N146. Residues I167–I186 traverse the membrane as a helical segment. V178–I186 contributes to the dolichyl phosphate binding site. N185 is a binding site for tunicamycin A1. N185 contacts Mg(2+). Residues L187–G192 lie on the Cytoplasmic side of the membrane. N191 is a binding site for UDP-N-acetyl-alpha-D-glucosamine. A helical membrane pass occupies residues L193–L213. Residues E214–R218 lie on the Lumenal side of the membrane. The chain crosses the membrane as a helical span at residues D219–N242. Over W243 to V250 the chain is Cytoplasmic. The helical transmembrane segment at G251–G269 threads the bilayer. D252 lines the tunicamycin A1 pocket. D252 contributes to the Mg(2+) binding site. Residues H270–F271 are Lumenal-facing. Residues S272–L293 form a helical membrane-spanning segment. Over L294–H375 the chain is Cytoplasmic. Residue R301–R303 coordinates UDP-N-acetyl-alpha-D-glucosamine. R303 provides a ligand contact to tunicamycin A1. Residues E376 to Q400 form a helical membrane-spanning segment. Over L401–V408 the chain is Lumenal.

The protein belongs to the glycosyltransferase 4 family. Homodimer. Mg(2+) serves as cofactor.

It localises to the endoplasmic reticulum membrane. It catalyses the reaction a di-trans,poly-cis-dolichyl phosphate + UDP-N-acetyl-alpha-D-glucosamine = an N-acetyl-alpha-D-glucosaminyl-diphospho-di-trans,poly-cis-dolichol + UMP. The protein operates within protein modification; protein glycosylation. With respect to regulation, inhibited by natural nucleoside antibiotic tunicamycin, which acts as a structural analog and competitor of UDP-GlcNAc. Activated by mannosylphosphoryldolichol and phospholipids such as phosphatidylglycerol and phosphatidylcholine. Functionally, UDP-N-acetylglucosamine--dolichyl-phosphate N-acetylglucosaminephosphotransferase that operates in the biosynthetic pathway of dolichol-linked oligosaccharides, the glycan precursors employed in protein asparagine (N)-glycosylation. The assembly of dolichol-linked oligosaccharides begins on the cytosolic side of the endoplasmic reticulum membrane and finishes in its lumen. The sequential addition of sugars to dolichol pyrophosphate produces dolichol-linked oligosaccharides containing fourteen sugars, including two GlcNAcs, nine mannoses and three glucoses. Once assembled, the oligosaccharide is transferred from the lipid to nascent proteins by oligosaccharyltransferases. Catalyzes the initial step of dolichol-linked oligosaccharide biosynthesis, transfering GlcNAc-1-P from cytosolic UDP-GlcNAc onto the carrier lipid dolichyl phosphate (P-dolichol), yielding GlcNAc-P-P-dolichol embedded in the cytoplasmic leaflet of the endoplasmic reticulum membrane. The chain is UDP-N-acetylglucosamine--dolichyl-phosphate N-acetylglucosaminephosphotransferase from Homo sapiens (Human).